The primary structure comprises 588 residues: DNA ligase (588 aa).

E250 contacts ATP. K252 (N6-AMP-lysine intermediate) is an active-site residue. The ATP site is built by R257, R272, E302, F342, R417, and K423.

It belongs to the ATP-dependent DNA ligase family. Requires Mg(2+) as cofactor.

It carries out the reaction ATP + (deoxyribonucleotide)n-3'-hydroxyl + 5'-phospho-(deoxyribonucleotide)m = (deoxyribonucleotide)n+m + AMP + diphosphate.. DNA ligase that seals nicks in double-stranded DNA during DNA replication, DNA recombination and DNA repair. The sequence is that of DNA ligase from Nitrosopumilus maritimus (strain SCM1).